A 152-amino-acid chain; its full sequence is MKTPIELKILDSRIGSEFPLPAYATPGSAGMDLRAMIDTTMTIAPGETQLIPTGIAIHVADPGLAAVILPRSGLGHKHGIVLGNLVGLIDSDYQGPLMVSCWNRSDTPFTLEIGDRLAQLVFVPVVQAQFKLVDEFDSSDRGEGGFGHSGTK.

Substrate contacts are provided by residues 71-73, Asn84, 88-90, and Met98; these read RSG and LID.

It belongs to the dUTPase family. It depends on Mg(2+) as a cofactor.

The catalysed reaction is dUTP + H2O = dUMP + diphosphate + H(+). It functions in the pathway pyrimidine metabolism; dUMP biosynthesis; dUMP from dCTP (dUTP route): step 2/2. In terms of biological role, this enzyme is involved in nucleotide metabolism: it produces dUMP, the immediate precursor of thymidine nucleotides and it decreases the intracellular concentration of dUTP so that uracil cannot be incorporated into DNA. The sequence is that of Deoxyuridine 5'-triphosphate nucleotidohydrolase from Shewanella sp. (strain ANA-3).